A 70-amino-acid polypeptide reads, in one-letter code: Conotoxin Cl9.1 (70 aa).

Residues M1–T20 form the signal peptide. Positions L21–R50 are excised as a propeptide. 3 cysteine pairs are disulfide-bonded: C51/C63, C56/C67, and C61/C70.

The protein belongs to the conotoxin M superfamily. In terms of tissue distribution, expressed by the venom duct.

The protein resides in the secreted. The chain is Conotoxin Cl9.1 from Californiconus californicus (California cone).